The primary structure comprises 447 residues: Cysteine--tRNA ligase (447 aa).

C28 contacts Zn(2+). A 'HIGH' region motif is present at residues 30 to 40 (PTVYNYIHIGN). C211, H236, and E240 together coordinate Zn(2+). Positions 268–272 (KMSKS) match the 'KMSKS' region motif. K271 contributes to the ATP binding site.

This sequence belongs to the class-I aminoacyl-tRNA synthetase family. As to quaternary structure, monomer. Zn(2+) is required as a cofactor.

It localises to the cytoplasm. The enzyme catalyses tRNA(Cys) + L-cysteine + ATP = L-cysteinyl-tRNA(Cys) + AMP + diphosphate. In Streptococcus pyogenes serotype M3 (strain ATCC BAA-595 / MGAS315), this protein is Cysteine--tRNA ligase.